Here is a 389-residue protein sequence, read N- to C-terminus: Formate-dependent phosphoribosylglycinamide formyltransferase (389 aa).

N(1)-(5-phospho-beta-D-ribosyl)glycinamide contacts are provided by residues 15–16 (EL) and glutamate 75. Residues arginine 107, lysine 148, 153-158 (SSGKGQ), 188-191 (EEFL), and glutamate 196 contribute to the ATP site. The ATP-grasp domain maps to 112–302 (DLAAGELALR…EFELHLRAVL (191 aa)). Residues glutamate 261 and glutamate 273 each coordinate Mg(2+). Residues aspartate 280, lysine 350, and 357 to 358 (RR) contribute to the N(1)-(5-phospho-beta-D-ribosyl)glycinamide site.

The protein belongs to the PurK/PurT family. Homodimer.

The catalysed reaction is N(1)-(5-phospho-beta-D-ribosyl)glycinamide + formate + ATP = N(2)-formyl-N(1)-(5-phospho-beta-D-ribosyl)glycinamide + ADP + phosphate + H(+). It functions in the pathway purine metabolism; IMP biosynthesis via de novo pathway; N(2)-formyl-N(1)-(5-phospho-D-ribosyl)glycinamide from N(1)-(5-phospho-D-ribosyl)glycinamide (formate route): step 1/1. Functionally, involved in the de novo purine biosynthesis. Catalyzes the transfer of formate to 5-phospho-ribosyl-glycinamide (GAR), producing 5-phospho-ribosyl-N-formylglycinamide (FGAR). Formate is provided by PurU via hydrolysis of 10-formyl-tetrahydrofolate. The chain is Formate-dependent phosphoribosylglycinamide formyltransferase from Synechococcus sp. (strain WH7803).